A 47-amino-acid chain; its full sequence is Large ribosomal subunit protein eL40 (47 aa).

This sequence belongs to the eukaryotic ribosomal protein eL40 family.

This is Large ribosomal subunit protein eL40 from Methanococcus maripaludis (strain C5 / ATCC BAA-1333).